A 162-amino-acid chain; its full sequence is Transcription antitermination protein RfaH (162 aa).

The protein belongs to the RfaH family. Interacts with both the nontemplate DNA and the RNA polymerase (RNAP).

Enhances distal genes transcription elongation in a specialized subset of operons that encode extracytoplasmic components. RfaH is recruited into a multi-component RNA polymerase complex by the ops element, which is a short conserved DNA sequence located downstream of the main promoter of these operons. Once bound, RfaH suppresses pausing and inhibits Rho-dependent and intrinsic termination at a subset of sites. Termination signals are bypassed, which allows complete synthesis of long RNA chains. Also negatively controls expression and surface presentation of AG43 and possibly another AG43-independent factor that mediates cell-cell interactions and biofilm formation,. The sequence is that of Transcription antitermination protein RfaH from Escherichia coli O6:K15:H31 (strain 536 / UPEC).